Consider the following 196-residue polypeptide: Peptide methionine sulfoxide reductase MsrA 2 (196 aa).

Cys-36 is a catalytic residue.

The protein belongs to the MsrA Met sulfoxide reductase family.

It catalyses the reaction L-methionyl-[protein] + [thioredoxin]-disulfide + H2O = L-methionyl-(S)-S-oxide-[protein] + [thioredoxin]-dithiol. It carries out the reaction [thioredoxin]-disulfide + L-methionine + H2O = L-methionine (S)-S-oxide + [thioredoxin]-dithiol. Has an important function as a repair enzyme for proteins that have been inactivated by oxidation. Catalyzes the reversible oxidation-reduction of methionine sulfoxide in proteins to methionine. This Caulobacter vibrioides (strain ATCC 19089 / CIP 103742 / CB 15) (Caulobacter crescentus) protein is Peptide methionine sulfoxide reductase MsrA 2 (msrA2).